Reading from the N-terminus, the 146-residue chain is Large ribosomal subunit protein uL15 (146 aa).

Positions 1-46 (MLHQIKPFKGARKTVKRLGRGCGSGTGKTSGKGHKGQLARSGGGVR) are disordered. Residues 9 to 19 (KGARKTVKRLG) are compositionally biased toward basic residues. Residues 20 to 30 (RGCGSGTGKTS) are compositionally biased toward gly residues.

This sequence belongs to the universal ribosomal protein uL15 family. As to quaternary structure, part of the 50S ribosomal subunit.

Its function is as follows. Binds to the 23S rRNA. The sequence is that of Large ribosomal subunit protein uL15 from Phytoplasma mali (strain AT).